The following is a 651-amino-acid chain: DNA ligase (651 aa).

NAD(+) is bound by residues 30–34, 79–80, and glutamate 105; these read DEEYD and SM. Lysine 107 (N6-AMP-lysine intermediate) is an active-site residue. Residues arginine 128, glutamate 162, and lysine 301 each contribute to the NAD(+) site. Residues cysteine 395, cysteine 398, cysteine 411, and cysteine 416 each contribute to the Zn(2+) site. In terms of domain architecture, BRCT spans 570–651; that stretch reads ALNENISNKT…NALLGGDDEV (82 aa).

Belongs to the NAD-dependent DNA ligase family. LigA subfamily. The cofactor is Mg(2+). It depends on Mn(2+) as a cofactor.

It catalyses the reaction NAD(+) + (deoxyribonucleotide)n-3'-hydroxyl + 5'-phospho-(deoxyribonucleotide)m = (deoxyribonucleotide)n+m + AMP + beta-nicotinamide D-nucleotide.. Its function is as follows. DNA ligase that catalyzes the formation of phosphodiester linkages between 5'-phosphoryl and 3'-hydroxyl groups in double-stranded DNA using NAD as a coenzyme and as the energy source for the reaction. It is essential for DNA replication and repair of damaged DNA. This chain is DNA ligase, found in Campylobacter lari (strain RM2100 / D67 / ATCC BAA-1060).